The chain runs to 330 residues: Aspartate--ammonia ligase (330 aa).

This sequence belongs to the class-II aminoacyl-tRNA synthetase family. AsnA subfamily.

It is found in the cytoplasm. The catalysed reaction is L-aspartate + NH4(+) + ATP = L-asparagine + AMP + diphosphate + H(+). It functions in the pathway amino-acid biosynthesis; L-asparagine biosynthesis; L-asparagine from L-aspartate (ammonia route): step 1/1. This is Aspartate--ammonia ligase from Streptococcus pyogenes serotype M5 (strain Manfredo).